Consider the following 582-residue polypeptide: Aspartate--tRNA ligase (582 aa).

Residue Glu-174 coordinates L-aspartate. Residues 198 to 201 (QITK) form an aspartate region. Arg-220 provides a ligand contact to L-aspartate. ATP-binding positions include 220–222 (RDE) and Gln-229. Residue His-443 coordinates L-aspartate. An ATP-binding site is contributed by Glu-477. L-aspartate is bound at residue Arg-484. 529-532 (GLDR) contributes to the ATP binding site.

The protein belongs to the class-II aminoacyl-tRNA synthetase family. Type 1 subfamily. In terms of assembly, homodimer.

The protein resides in the cytoplasm. It carries out the reaction tRNA(Asp) + L-aspartate + ATP = L-aspartyl-tRNA(Asp) + AMP + diphosphate. Functionally, catalyzes the attachment of L-aspartate to tRNA(Asp) in a two-step reaction: L-aspartate is first activated by ATP to form Asp-AMP and then transferred to the acceptor end of tRNA(Asp). In Streptococcus pyogenes serotype M3 (strain ATCC BAA-595 / MGAS315), this protein is Aspartate--tRNA ligase.